The sequence spans 134 residues: Large ribosomal subunit protein uL16c (134 aa).

Belongs to the universal ribosomal protein uL16 family. Part of the 50S ribosomal subunit.

The protein localises to the plastid. It localises to the chloroplast. The protein is Large ribosomal subunit protein uL16c of Guillardia theta (Cryptophyte).